A 422-amino-acid chain; its full sequence is Tyrosine--tRNA ligase (422 aa).

Residue Tyr-36 participates in L-tyrosine binding. The short motif at 41–50 (PTADSLHIGH) is the 'HIGH' region element. Tyr-175 and Gln-179 together coordinate L-tyrosine. The short motif at 235 to 239 (KFGKT) is the 'KMSKS' region element. Position 238 (Lys-238) interacts with ATP. Positions 354 to 411 (TSLQEALTKSKLATSRSQARYFIKSNAITINAHKQSKIEYIFQDSDRIYNLYTLLKRG) constitute an S4 RNA-binding domain.

It belongs to the class-I aminoacyl-tRNA synthetase family. TyrS type 1 subfamily. Homodimer.

It is found in the cytoplasm. It carries out the reaction tRNA(Tyr) + L-tyrosine + ATP = L-tyrosyl-tRNA(Tyr) + AMP + diphosphate + H(+). Its function is as follows. Catalyzes the attachment of tyrosine to tRNA(Tyr) in a two-step reaction: tyrosine is first activated by ATP to form Tyr-AMP and then transferred to the acceptor end of tRNA(Tyr). This is Tyrosine--tRNA ligase from Blochmanniella floridana.